We begin with the raw amino-acid sequence, 62 residues long: E3 SUMO-protein ligase EGR2 (62 aa).

C2H2-type zinc fingers lie at residues 1–21 (AEGC…IRIH), 27–49 (FQCA…IRTH), and 55–62 (FACDYCGR).

The protein belongs to the EGR C2H2-type zinc-finger protein family. In terms of assembly, interacts with HCFC1. Interacts with WWP2. Interacts with UBC9. Interacts with CITED1. Interacts (via phosphorylated form) with SFN. In terms of processing, ubiquitinated by WWP2 leading to proteasomal degradation. Post-translationally, acetylated. May be deacetylated by HDAC6, HDAC10 or SIRT1.

It localises to the nucleus. Its pathway is protein modification; protein sumoylation. Sequence-specific DNA-binding transcription factor. Plays a role in hindbrain segmentation by regulating the expression of a subset of homeobox containing genes and in Schwann cell myelination by regulating the expression of genes involved in the formation and maintenance of myelin. Binds to two EGR2-consensus sites EGR2A (5'-CTGTAGGAG-3') and EGR2B (5'-ATGTAGGTG-3') in the HOXB3 enhancer and promotes HOXB3 transcriptional activation. Binds to specific DNA sites located in the promoter region of HOXA4, HOXB2 and ERBB2. Regulates hindbrain segmentation by controlling the expression of Hox genes, such as HOXA4, HOXB3 and HOXB2, and thereby specifying odd and even rhombomeres. Promotes the expression of HOXB3 in the rhombomere r5 in the hindbrain. Regulates myelination in the peripheral nervous system after birth, possibly by regulating the expression of myelin proteins, such as MPZ, and by promoting the differentiation of Schwann cells. Involved in the development of the jaw openener musculature, probably by playing a role in its innervation through trigeminal motor neurons. May play a role in adipogenesis, possibly by regulating the expression of CEBPB. In terms of biological role, E3 SUMO-protein ligase helping SUMO1 conjugation to its coregulators NAB1 and NAB2, whose sumoylation down-regulates EGR2 transcriptional activity. The polypeptide is E3 SUMO-protein ligase EGR2 (EGR2) (Cerdocyon thous (Crab-eating fox)).